Reading from the N-terminus, the 404-residue chain is Alanyl-tRNA editing protein AlaX-L (404 aa).

Residues H104, H108, C202, and H206 each contribute to the Zn(2+) site.

This sequence belongs to the class-II aminoacyl-tRNA synthetase family. Editing domain AlaX-L subfamily. Zn(2+) is required as a cofactor.

The protein resides in the cytoplasm. Its function is as follows. Functions in trans to edit the amino acid moiety from mischarged charged tRNA(Ala). The chain is Alanyl-tRNA editing protein AlaX-L (alaXL) from Pyrococcus horikoshii (strain ATCC 700860 / DSM 12428 / JCM 9974 / NBRC 100139 / OT-3).